The sequence spans 893 residues: Serine/threonine-protein kinase PLK4 (893 aa).

In terms of domain architecture, Protein kinase spans 12–265 (FRVGNLLGKG…LSSVLDHPFM (254 aa)). ATP-binding positions include 18–26 (LGKGSFAGV) and Lys-41. N6-acetyllysine occurs at positions 45 and 46. Catalysis depends on Asp-136, which acts as the Proton acceptor. Residues 349-358 (NQEQETSNSG) are compositionally biased toward polar residues. The disordered stretch occupies residues 349-393 (NQEQETSNSGRGRVIQEAEERPHSRYLRRAHSSDRSETSHGQSRV). Over residues 362-371 (VIQEAEERPH) the composition is skewed to basic and acidic residues. 2 positions are modified to phosphoserine: Ser-403 and Ser-588. One can recognise a Cryptic POLO box 1 (CPB1) domain in the interval 509–622 (TLRSITSPLT…SRFVQLVRSK (114 aa)). The 114-residue stretch at 623–736 (SPKITYFTRY…GRRPSSTSSP (114 aa)) folds into the Cryptic POLO box 2 (CPB2) domain. Residues 730 to 749 (PSSTSSPKALTPPPPVDPNY) form a disordered region. One can recognise a POLO box domain in the interval 809–887 (QLLKSVFVKN…LSSILLMFSN (79 aa)).

The protein belongs to the protein kinase superfamily. Ser/Thr protein kinase family. CDC5/Polo subfamily. Homodimer. Interacts with CEP152 (via N-terminus). Interacts with CEP78; this interaction may be important for proper PLK4 localization to the centriole and PLK4-induced overduplication of centrioles. Interacts with CEP131. Interacts simultaneously with TENT5C and CEP192. Interacts with TENT5C; this interaction leads to the TENT5C recruitment in the centrosome. Interacts with CEP85; this interaction may be important in cell migration and centriole assembly. In terms of processing, ubiquitinated; leading to its degradation by the proteasome. Tyrosine-phosphorylated by TEC. Post-translationally, acetylation by KAT2A and KAT2B impairs kinase activity by shifting the kinase to an inactive conformation.

The protein localises to the cytoplasm. The protein resides in the cytoskeleton. It localises to the microtubule organizing center. It is found in the centrosome. Its subcellular location is the centriole. The protein localises to the nucleus. The protein resides in the nucleolus. It localises to the cleavage furrow. It carries out the reaction L-seryl-[protein] + ATP = O-phospho-L-seryl-[protein] + ADP + H(+). The enzyme catalyses L-threonyl-[protein] + ATP = O-phospho-L-threonyl-[protein] + ADP + H(+). Its function is as follows. Serine/threonine-protein kinase that plays a central role in centriole duplication. Able to trigger procentriole formation on the surface of the parental centriole cylinder, leading to the recruitment of centriole biogenesis proteins such as SASS6, CPAP, CCP110, CEP135 and gamma-tubulin. When overexpressed, it is able to induce centrosome amplification through the simultaneous generation of multiple procentrioles adjoining each parental centriole during S phase. Phosphorylates 'Ser-151' of FBXW5 during the G1/S transition, leading to inhibit FBXW5 ability to ubiquitinate SASS6. Its central role in centriole replication suggests a possible role in tumorigenesis, centrosome aberrations being frequently observed in tumors. Also involved in deuterosome-mediated centriole amplification in multiciliated that can generate more than 100 centrioles. Also involved in trophoblast differentiation by phosphorylating HAND1, leading to disrupt the interaction between HAND1 and MDFIC and activate HAND1. Phosphorylates CDC25C and CHEK2. Required for the recruitment of STIL to the centriole and for STIL-mediated centriole amplification. Phosphorylates CEP131 and PCM1 which is essential for proper organization and integrity of centriolar satellites. The protein is Serine/threonine-protein kinase PLK4 of Bos taurus (Bovine).